The following is a 211-amino-acid chain: Lipoprotein signal peptidase (211 aa).

The next 3 helical transmembrane spans lie at 12–32 (LLAL…YLAV), 96–116 (AFRN…ILHY), and 127–147 (LQVA…DRLA). Catalysis depends on residues Asp-153 and Asp-174. The chain crosses the membrane as a helical span at residues 167 to 187 (WPTFNIADSLIVVGVALLVLH).

It belongs to the peptidase A8 family.

Its subcellular location is the cell inner membrane. It carries out the reaction Release of signal peptides from bacterial membrane prolipoproteins. Hydrolyzes -Xaa-Yaa-Zaa-|-(S,diacylglyceryl)Cys-, in which Xaa is hydrophobic (preferably Leu), and Yaa (Ala or Ser) and Zaa (Gly or Ala) have small, neutral side chains.. Its pathway is protein modification; lipoprotein biosynthesis (signal peptide cleavage). In terms of biological role, this protein specifically catalyzes the removal of signal peptides from prolipoproteins. The protein is Lipoprotein signal peptidase of Anaeromyxobacter sp. (strain Fw109-5).